Reading from the N-terminus, the 197-residue chain is Imidazoleglycerol-phosphate dehydratase (197 aa).

Belongs to the imidazoleglycerol-phosphate dehydratase family.

It is found in the cytoplasm. It carries out the reaction D-erythro-1-(imidazol-4-yl)glycerol 3-phosphate = 3-(imidazol-4-yl)-2-oxopropyl phosphate + H2O. It functions in the pathway amino-acid biosynthesis; L-histidine biosynthesis; L-histidine from 5-phospho-alpha-D-ribose 1-diphosphate: step 6/9. In Leptospira biflexa serovar Patoc (strain Patoc 1 / Ames), this protein is Imidazoleglycerol-phosphate dehydratase.